Reading from the N-terminus, the 390-residue chain is Stearoyl-[acyl-carrier-protein] 9-desaturase 5, chloroplastic (390 aa).

Positions 1–22 (MAFAASHTASPSSCGGVAQRRS) are disordered. Residues 1–31 (MAFAASHTASPSSCGGVAQRRSNGMSPVVAM) constitute a chloroplast transit peptide. Residues glutamate 132, glutamate 170, histidine 173, glutamate 223, glutamate 256, and histidine 259 each contribute to the Fe cation site.

The protein belongs to the fatty acid desaturase type 2 family. As to quaternary structure, homodimer. Fe(2+) serves as cofactor.

The protein resides in the plastid. It localises to the chloroplast. The enzyme catalyses octadecanoyl-[ACP] + 2 reduced [2Fe-2S]-[ferredoxin] + O2 + 2 H(+) = (9Z)-octadecenoyl-[ACP] + 2 oxidized [2Fe-2S]-[ferredoxin] + 2 H2O. The protein operates within lipid metabolism; fatty acid metabolism. Its function is as follows. Converts stearoyl-ACP to oleoyl-ACP by introduction of a cis double bond between carbons 9 and 10 of the acyl chain. This Oryza sativa subsp. japonica (Rice) protein is Stearoyl-[acyl-carrier-protein] 9-desaturase 5, chloroplastic.